The primary structure comprises 427 residues: 3-phosphoshikimate 1-carboxyvinyltransferase (427 aa).

3-phosphoshikimate-binding residues include lysine 23, serine 24, and arginine 28. Lysine 23 provides a ligand contact to phosphoenolpyruvate. The phosphoenolpyruvate site is built by glycine 97 and arginine 125. 3-phosphoshikimate-binding residues include serine 170, serine 171, glutamine 172, serine 198, aspartate 314, asparagine 337, and lysine 341. Residue glutamine 172 participates in phosphoenolpyruvate binding. The active-site Proton acceptor is the aspartate 314. Residues arginine 345, arginine 387, and lysine 412 each coordinate phosphoenolpyruvate.

The protein belongs to the EPSP synthase family. As to quaternary structure, monomer.

It localises to the cytoplasm. It carries out the reaction 3-phosphoshikimate + phosphoenolpyruvate = 5-O-(1-carboxyvinyl)-3-phosphoshikimate + phosphate. Its pathway is metabolic intermediate biosynthesis; chorismate biosynthesis; chorismate from D-erythrose 4-phosphate and phosphoenolpyruvate: step 6/7. Catalyzes the transfer of the enolpyruvyl moiety of phosphoenolpyruvate (PEP) to the 5-hydroxyl of shikimate-3-phosphate (S3P) to produce enolpyruvyl shikimate-3-phosphate and inorganic phosphate. This Buchnera aphidicola subsp. Acyrthosiphon pisum (strain Tuc7) protein is 3-phosphoshikimate 1-carboxyvinyltransferase.